Consider the following 335-residue polypeptide: MVREGEERIGNRVSLGVIGVSYRETTLQQREQVLHILQQAQGSFRLEVFQEEKDYVLLATCHRVELYSVAPAELFDSLAQEIELLGVSPYFYRNQDCFAHLFCVAGGLDSLVLGETEIQGQVKRAYLQAAREQKLSFALHFLFQKALKEGKVFRAKGGAPYAEITIPILVDQELRRRQIDKKASLLFIGYSEINRSVAYHLQRQGFSCITFCSRQQLPTLSMRQVVREELCFQDPYRVVFLGSSELQYALPHSLWESIWDIPDRIVFDFAVPRALPSHTVFPHRYVDMDQISDWLREHRKEVNSAHLHSLREVAYRYWNSLNQRLERRDCVGANA.

Substrate contacts are provided by residues 60–63 (TCHR), Ser110, 115–117 (ETE), and Gln121. Residue Cys61 is the Nucleophile of the active site. 189–194 (GYSEIN) contributes to the NADP(+) binding site.

Belongs to the glutamyl-tRNA reductase family. As to quaternary structure, homodimer.

It catalyses the reaction (S)-4-amino-5-oxopentanoate + tRNA(Glu) + NADP(+) = L-glutamyl-tRNA(Glu) + NADPH + H(+). Its pathway is porphyrin-containing compound metabolism; protoporphyrin-IX biosynthesis; 5-aminolevulinate from L-glutamyl-tRNA(Glu): step 1/2. Catalyzes the NADPH-dependent reduction of glutamyl-tRNA(Glu) to glutamate 1-semialdehyde (GSA). The sequence is that of Glutamyl-tRNA reductase from Chlamydia trachomatis serovar A (strain ATCC VR-571B / DSM 19440 / HAR-13).